Reading from the N-terminus, the 226-residue chain is Cytochrome c-553I (226 aa).

The N-terminal stretch at Met-1–Ala-22 is a signal peptide. Residues Ala-43 to Val-68 are disordered. Heme-binding residues include Cys-125, Cys-128, His-129, and Met-173. The disordered stretch occupies residues Arg-203 to Gly-226.

Binds 1 heme group per subunit.

The protein localises to the periplasm. This is Cytochrome c-553I (cycB) from Paracoccus denitrificans.